The primary structure comprises 458 residues: MDYLPLFFDLKAKPCLIVGGGTIATRKARLLHKAGAKLHVVAPKVSEELEKLVAASNGKVFKQEYDQTFLDDVILVISATDIDAVNSVVAADCHAIKLPVNVVDSPALCSVIMPAIIDRSPLIIGVTSGGEAPVLARRVRSMLESSIPAAYGQLAQLASKFRQRAKDVFENGDLRRRFWENILNGPIAEKVLGGNLAAAEQLIEAQLDSASVEKTGEVYLVGAGPGDPDLLTFKALRLMQQAEVVLYDRLVSEPILEMTRRDAERIYVGKKRAEHAVPQQKINQMLLELAQQGKRVLRLKGGDPFIFGRGGEEIDLLAEHKIPFQVVPGITAASGCASYSGIPLTHRDYSQSVRFITGHLQEGKENFRWSEFVDKQQTLVFYMGLAGLETICSKLIEYGKSPSTPAALIERGTLPEQRVHVSDLAGLAAKIEGLDVHAPTLLIIGDVVRCHEKLNWYK.

Residues 1-203 (MDYLPLFFDL…GNLAAAEQLI (203 aa)) form a precorrin-2 dehydrogenase /sirohydrochlorin ferrochelatase region. NAD(+) is bound by residues 22-23 (TI) and 43-44 (PK). The residue at position 128 (Ser128) is a Phosphoserine. Residues 216-458 (GEVYLVGAGP…RCHEKLNWYK (243 aa)) form a uroporphyrinogen-III C-methyltransferase region. S-adenosyl-L-methionine is bound at residue Pro225. Catalysis depends on Asp248, which acts as the Proton acceptor. The Proton donor role is filled by Lys270. S-adenosyl-L-methionine is bound by residues 301 to 303 (GGD), Ile306, 331 to 332 (TA), Met383, and Gly412.

This sequence in the N-terminal section; belongs to the precorrin-2 dehydrogenase / sirohydrochlorin ferrochelatase family. It in the C-terminal section; belongs to the precorrin methyltransferase family.

The enzyme catalyses uroporphyrinogen III + 2 S-adenosyl-L-methionine = precorrin-2 + 2 S-adenosyl-L-homocysteine + H(+). The catalysed reaction is precorrin-2 + NAD(+) = sirohydrochlorin + NADH + 2 H(+). It carries out the reaction siroheme + 2 H(+) = sirohydrochlorin + Fe(2+). It participates in cofactor biosynthesis; adenosylcobalamin biosynthesis; precorrin-2 from uroporphyrinogen III: step 1/1. Its pathway is cofactor biosynthesis; adenosylcobalamin biosynthesis; sirohydrochlorin from precorrin-2: step 1/1. The protein operates within porphyrin-containing compound metabolism; siroheme biosynthesis; precorrin-2 from uroporphyrinogen III: step 1/1. It functions in the pathway porphyrin-containing compound metabolism; siroheme biosynthesis; siroheme from sirohydrochlorin: step 1/1. It participates in porphyrin-containing compound metabolism; siroheme biosynthesis; sirohydrochlorin from precorrin-2: step 1/1. In terms of biological role, multifunctional enzyme that catalyzes the SAM-dependent methylations of uroporphyrinogen III at position C-2 and C-7 to form precorrin-2 via precorrin-1. Then it catalyzes the NAD-dependent ring dehydrogenation of precorrin-2 to yield sirohydrochlorin. Finally, it catalyzes the ferrochelation of sirohydrochlorin to yield siroheme. The protein is Siroheme synthase of Saccharophagus degradans (strain 2-40 / ATCC 43961 / DSM 17024).